The following is a 273-amino-acid chain: DnaJ homolog subfamily C member 27 (273 aa).

GTP is bound by residues 23–30, 71–75, and 134–137; these read GNAEVGKS, DMAGH, and NKID. Positions 217-273 constitute a J domain; that stretch reads DSWDMLGVKPGATRDEVNKAYRKLAVLLHPDKCVAPGSEDAFKAVVNARTALLKNIK.

Belongs to the small GTPase superfamily. Rab family.

The protein localises to the nucleus. Functionally, GTPase possibly involved in regulation of the MEK/ERK pathway. The polypeptide is DnaJ homolog subfamily C member 27 (DNAJC27) (Gallus gallus (Chicken)).